We begin with the raw amino-acid sequence, 736 residues long: 1,4-alpha-glucan branching enzyme GlgB (736 aa).

Residue D415 is the Nucleophile of the active site. E468 functions as the Proton donor in the catalytic mechanism.

This sequence belongs to the glycosyl hydrolase 13 family. GlgB subfamily. In terms of assembly, monomer.

The catalysed reaction is Transfers a segment of a (1-&gt;4)-alpha-D-glucan chain to a primary hydroxy group in a similar glucan chain.. It functions in the pathway glycan biosynthesis; glycogen biosynthesis. Catalyzes the formation of the alpha-1,6-glucosidic linkages in glycogen by scission of a 1,4-alpha-linked oligosaccharide from growing alpha-1,4-glucan chains and the subsequent attachment of the oligosaccharide to the alpha-1,6 position. In Rhodopirellula baltica (strain DSM 10527 / NCIMB 13988 / SH1), this protein is 1,4-alpha-glucan branching enzyme GlgB.